Here is a 293-residue protein sequence, read N- to C-terminus: Calcium uniporter protein 2, mitochondrial (293 aa).

The transit peptide at 1–33 (MWSVMGLVRRTAMSSTVNKASPVRSLLGGFRCL) directs the protein to the mitochondrion. The helical transmembrane segment at 168-188 (ILWGGLGYSVVQIGIFVRLTF) threads the bilayer. Residues 193–201 (WDVMEPITF) carry the Selectivity filter motif. E197 lines the Ca(2+) pocket. A helical membrane pass occupies residues 198–218 (PITFFTTATGIIVGYAYFLMT).

This sequence belongs to the MCU (TC 1.A.77) family.

It is found in the mitochondrion inner membrane. It catalyses the reaction Ca(2+)(in) = Ca(2+)(out). Its function is as follows. Mitochondrial inner membrane calcium uniporter that mediates calcium uptake into mitochondria. Constitutes a pore-forming and calcium-conducting subunit. Mitochondrial calcium homeostasis plays key roles in cellular physiology and regulates cell bioenergetics, cytoplasmic calcium signals and activation of cell death pathways. The polypeptide is Calcium uniporter protein 2, mitochondrial (Arabidopsis thaliana (Mouse-ear cress)).